The sequence spans 772 residues: Mitochondrial intermediate peptidase (772 aa).

The transit peptide at 1–42 (MFANSARNALKKRPQNLQPFRFQGCLFSKRANRPLTTKVQHL) directs the protein to the mitochondrion. Position 556 (H556) interacts with Zn(2+). Residue E557 is part of the active site. Residues H560 and H563 each contribute to the Zn(2+) site.

It belongs to the peptidase M3 family. The cofactor is Zn(2+).

It localises to the mitochondrion matrix. It catalyses the reaction Release of an N-terminal octapeptide as second stage of processing of some proteins imported into the mitochondrion.. Cleaves proteins, imported into the mitochondrion, to their mature size. While most mitochondrial precursor proteins are processed to the mature form in one step by mitochondrial processing peptidase (MPP), the sequential cleavage by MIP of an octapeptide after initial processing by MPP is a required step for a subgroup of nuclear-encoded precursor proteins destined for the matrix or the inner membrane. This chain is Mitochondrial intermediate peptidase (OCT1), found in Laccaria bicolor (strain S238N-H82 / ATCC MYA-4686) (Bicoloured deceiver).